Here is a 372-residue protein sequence, read N- to C-terminus: Cyclic GMP-AMP synthase-like receptor (372 aa).

Threonine 68 is a binding site for GTP. Residues serine 70 and 82–84 (EFD) each bind ATP. Residues glutamate 82, aspartate 84, and aspartate 190 each contribute to the Mg(2+) site. GTP is bound by residues aspartate 190 and 236–243 (LVCAPYWE). ATP-binding positions include 240–243 (PYWE), lysine 261, and 274–278 (SYTIK).

This sequence belongs to the mab-21 family. It depends on Mg(2+) as a cofactor. Mn(2+) serves as cofactor.

The catalysed reaction is GTP + ATP = 3',2'-cGAMP + 2 diphosphate. It catalyses the reaction GTP + ATP = pppA(2'-5')pG + diphosphate. The enzyme catalyses pppA(2'-5')pG = 3',2'-cGAMP + diphosphate. With respect to regulation, the enzyme activity is specifically activated by double-stranded RNA (dsRNA). Its function is as follows. Nucleotidyltransferase that catalyzes the formation of cyclic GMP-AMP (3',2'-cGAMP) from ATP and GTP and plays a key role in innate immunity. Synthesizes 3',2'-cGAMP in a two-step reaction through production of the linear intermediate pppA(2'-5')pG. Acts as a key sensor of double-stranded RNA (dsRNA), the presence of dsRNA in the cytoplasm being a danger signal that triggers the immune responses. Directly binds dsRNA longer than 15 bp, activating the nucleotidyltransferase activity, leading to synthesis of 3',2'-cGAMP, a second messenger that binds to and activates Sting, thereby triggering the antiviral immune response via activation of the NF-kappa-B transcription factor Rel (Relish). This Drosophila eugracilis (Fruit fly) protein is Cyclic GMP-AMP synthase-like receptor.